Consider the following 944-residue polypeptide: Leucine--tRNA ligase 2 (944 aa).

The short motif at 36–46 (PYPNSPFHLGH) is the 'HIGH' region element. Residues 621–625 (KMSKS) carry the 'KMSKS' region motif. ATP is bound at residue Lys624.

The protein belongs to the class-I aminoacyl-tRNA synthetase family.

It localises to the cytoplasm. It catalyses the reaction tRNA(Leu) + L-leucine + ATP = L-leucyl-tRNA(Leu) + AMP + diphosphate. This chain is Leucine--tRNA ligase 2, found in Sulfurisphaera tokodaii (strain DSM 16993 / JCM 10545 / NBRC 100140 / 7) (Sulfolobus tokodaii).